Consider the following 151-residue polypeptide: uncharacterized protein (151 aa).

To M.jannaschii MJ1244 and MJ1245.

This is an uncharacterized protein from Methanothermobacter thermautotrophicus (strain ATCC 29096 / DSM 1053 / JCM 10044 / NBRC 100330 / Delta H) (Methanobacterium thermoautotrophicum).